Here is a 338-residue protein sequence, read N- to C-terminus: Glycerol-3-phosphate dehydrogenase [NAD(P)+] (338 aa).

Ser14, Tyr15, His35, and Lys109 together coordinate NADPH. Sn-glycerol 3-phosphate-binding residues include Lys109, Gly138, and Thr140. Ala142 is a binding site for NADPH. 5 residues coordinate sn-glycerol 3-phosphate: Lys194, Asp247, Ser257, Arg258, and Asn259. Lys194 functions as the Proton acceptor in the catalytic mechanism. An NADPH-binding site is contributed by Arg258. NADPH contacts are provided by Val282 and Glu284.

It belongs to the NAD-dependent glycerol-3-phosphate dehydrogenase family.

The protein localises to the cytoplasm. The catalysed reaction is sn-glycerol 3-phosphate + NAD(+) = dihydroxyacetone phosphate + NADH + H(+). It carries out the reaction sn-glycerol 3-phosphate + NADP(+) = dihydroxyacetone phosphate + NADPH + H(+). It functions in the pathway membrane lipid metabolism; glycerophospholipid metabolism. In terms of biological role, catalyzes the reduction of the glycolytic intermediate dihydroxyacetone phosphate (DHAP) to sn-glycerol 3-phosphate (G3P), the key precursor for phospholipid synthesis. The protein is Glycerol-3-phosphate dehydrogenase [NAD(P)+] of Shewanella baltica (strain OS155 / ATCC BAA-1091).